A 238-amino-acid polypeptide reads, in one-letter code: 2-C-methyl-D-erythritol 4-phosphate cytidylyltransferase (238 aa).

Belongs to the IspD/TarI cytidylyltransferase family. IspD subfamily.

It carries out the reaction 2-C-methyl-D-erythritol 4-phosphate + CTP + H(+) = 4-CDP-2-C-methyl-D-erythritol + diphosphate. The protein operates within isoprenoid biosynthesis; isopentenyl diphosphate biosynthesis via DXP pathway; isopentenyl diphosphate from 1-deoxy-D-xylulose 5-phosphate: step 2/6. Its function is as follows. Catalyzes the formation of 4-diphosphocytidyl-2-C-methyl-D-erythritol from CTP and 2-C-methyl-D-erythritol 4-phosphate (MEP). The polypeptide is 2-C-methyl-D-erythritol 4-phosphate cytidylyltransferase (Acinetobacter baumannii (strain SDF)).